The chain runs to 485 residues: Skb1 localization factor 1 (485 aa).

Positions 1–200 (MSSIIQNPIE…VDDSDLTPHT (200 aa)) are sufficient for interaction with Skb1. Disordered regions lie at residues 117–230 (NAAN…MSRN), 286–416 (ETQH…LRRS), and 446–466 (TTQERKPVVKPDSIKTVKPEK). Over residues 171–182 (SRSSRYSKTSDL) the composition is skewed to polar residues. The segment covering 189–198 (RFVDDSDLTP) has biased composition (basic and acidic residues). 2 stretches are compositionally biased toward polar residues: residues 218–230 (GRSSSPDQMMSRN) and 341–363 (VGSSQPAEEFVGSSSSHGRQQDS). Residue Ser-222 is modified to Phosphoserine. Residues 371 to 393 (SERSYRRVRDQYLSKPRLSDKNR) show a composition bias toward basic and acidic residues. Positions 394-416 (YSTFSEFPGQGTPSASQSNLRRS) are enriched in polar residues. Positions 447–464 (TQERKPVVKPDSIKTVKP) are enriched in basic and acidic residues. Residues 451–485 (KPVVKPDSIKTVKPEKKKSKGFFKKLMHKISHIFD) form a required and sufficient for plasma membrane anchoring; lysine-rich, may bind to anionic lipids in the plasma membrane region. The residue at position 458 (Ser-458) is a Phosphoserine.

As to quaternary structure, interacts with Skb1.

Its subcellular location is the cell membrane. Its function is as follows. Acts as a membrane anchor for Skb1 in forming plasma membrane microdomains. Promotes mitotic entry by sequestering mitotic inhibitor Skb1 from its regulatory targets Cdr1 and Wee1. The chain is Skb1 localization factor 1 from Schizosaccharomyces pombe (strain 972 / ATCC 24843) (Fission yeast).